Consider the following 212-residue polypeptide: Small ribosomal subunit protein uS19m (212 aa).

A mitochondrion-targeting transit peptide spans 1–29 (MAFCTKLGGHWKQGVNVPVSSMLGSLRYM). Residues 31–109 (TKLYIGGLSP…FNISVNVAKD (79 aa)) enclose the RRM domain.

The protein belongs to the universal ribosomal protein uS19 family. Component of the mitochondrial ribosome small subunit.

The protein resides in the mitochondrion. Its function is as follows. The RNA-binding domain found in RPS19 may functionally replace the missing mitochondrial RPS13. This Arabidopsis thaliana (Mouse-ear cress) protein is Small ribosomal subunit protein uS19m (RPS19).